A 123-amino-acid chain; its full sequence is Anti-lipopolysaccharide factor (123 aa).

Residues 1–26 (MRKGVVAGLCLALVVMCLYLPQPCEA) form the signal peptide. N-linked (GlcNAc...) asparagine glycosylation is present at Asn-45. An intrachain disulfide couples Cys-55 to Cys-76.

As to expression, isoform 1 is highly expressed in muscle and stomach, moderately in heart and gill and at lower levels in hemocytes and hepatopancreas. Isoform 2 is mainly expressed in gill, hepatopancreas, muscle and eyestalk.

It localises to the secreted. May bind to bacterial LPS and thus specifically inhibit the LPS-mediated activation of the hemolymph coagulation. It has a strong antibacterial effect especially on the growth of Gram-negative bacteria. The chain is Anti-lipopolysaccharide factor from Portunus trituberculatus (Swimming crab).